A 179-amino-acid chain; its full sequence is Large ribosomal subunit protein uL5 (179 aa).

Belongs to the universal ribosomal protein uL5 family. Part of the 50S ribosomal subunit; part of the 5S rRNA/L5/L18/L25 subcomplex. Contacts the 5S rRNA and the P site tRNA. Forms a bridge to the 30S subunit in the 70S ribosome.

Functionally, this is one of the proteins that bind and probably mediate the attachment of the 5S RNA into the large ribosomal subunit, where it forms part of the central protuberance. In the 70S ribosome it contacts protein S13 of the 30S subunit (bridge B1b), connecting the 2 subunits; this bridge is implicated in subunit movement. Contacts the P site tRNA; the 5S rRNA and some of its associated proteins might help stabilize positioning of ribosome-bound tRNAs. The chain is Large ribosomal subunit protein uL5 from Bdellovibrio bacteriovorus (strain ATCC 15356 / DSM 50701 / NCIMB 9529 / HD100).